We begin with the raw amino-acid sequence, 127 residues long: Fluoride-specific ion channel FluC (127 aa).

Transmembrane regions (helical) follow at residues 28 to 48, 73 to 93, and 98 to 118; these read LALF…SLAM, TGVL…ALLI, and VGLA…GLFL. Na(+) contacts are provided by Gly-77 and Thr-80.

Belongs to the fluoride channel Fluc/FEX (TC 1.A.43) family.

The protein localises to the cell inner membrane. It carries out the reaction fluoride(in) = fluoride(out). Na(+) is not transported, but it plays an essential structural role and its presence is essential for fluoride channel function. Fluoride-specific ion channel. Important for reducing fluoride concentration in the cell, thus reducing its toxicity. This Beijerinckia indica subsp. indica (strain ATCC 9039 / DSM 1715 / NCIMB 8712) protein is Fluoride-specific ion channel FluC.